A 106-amino-acid polypeptide reads, in one-letter code: Urease subunit beta (106 aa).

This sequence belongs to the urease beta subunit family. As to quaternary structure, heterotrimer of UreA (gamma), UreB (beta) and UreC (alpha) subunits. Three heterotrimers associate to form the active enzyme.

It localises to the cytoplasm. It catalyses the reaction urea + 2 H2O + H(+) = hydrogencarbonate + 2 NH4(+). The protein operates within nitrogen metabolism; urea degradation; CO(2) and NH(3) from urea (urease route): step 1/1. This is Urease subunit beta from Prochlorococcus marinus subsp. pastoris (strain CCMP1986 / NIES-2087 / MED4).